A 701-amino-acid chain; its full sequence is Ubiquitin thioesterase zranb1 (701 aa).

The RanBP2-type 1 zinc-finger motif lies at 3-33 (EHGIKWACEYCTYENWPSAIKCTMCRAPRPS). Positions 10, 13, 24, and 27 each coordinate Zn(2+). The interval 38 to 59 (TEEPFKNSTPDVGSMERESGSP) is disordered. The RanBP2-type 2 zinc-finger motif lies at 79-108 (TSTKWSCHMCTYLNWPRAIRCTQCLSQRRT). Zn(2+) is bound by residues Cys85, Cys88, Cys99, and Cys102. Positions 108–129 (TRSPTESPQSSGSSLRAIPSPI) are disordered. Residues 111 to 121 (PTESPQSSGSS) show a composition bias toward low complexity. Residues 143-173 (IKGQHWTCSACTYENCAKAKKCVVCDHPTPN) form a RanBP2-type 3 zinc finger. Zn(2+) is bound by residues Cys150, Cys153, Cys164, and Cys167. The tract at residues 198–220 (WRGGCSSSNSQRRSPPTSKRDSD) is disordered. The segment covering 202-214 (CSSSNSQRRSPPT) has biased composition (polar residues). ANK repeat units lie at residues 253-283 (RKTD…SGGD) and 306-333 (YTLV…QHAA). Residues 425–585 (LYALWNRTAG…RGHFSALVAM (161 aa)) enclose the OTU domain. Cys436 functions as the Nucleophile in the catalytic mechanism. His578 acts as the Proton acceptor in catalysis.

Belongs to the peptidase C64 family.

It localises to the cytoplasm. The protein resides in the nucleus. The enzyme catalyses Thiol-dependent hydrolysis of ester, thioester, amide, peptide and isopeptide bonds formed by the C-terminal Gly of ubiquitin (a 76-residue protein attached to proteins as an intracellular targeting signal).. Ubiquitin thioesterase, which specifically hydrolyzes 'Lys-29'-linked and 'Lys-33'-linked diubiquitin. Also cleaves 'Lys-63'-linked chains, but with 40-fold less efficiency compared to 'Lys-29'-linked ones. Positive regulator of the Wnt signaling pathway that deubiquitinates apc protein, a negative regulator of Wnt-mediated transcription. Acts as a regulator of autophagy by mediating deubiquitination of pik3c3/vps34, thereby promoting autophagosome maturation. Plays a role in the regulation of cell morphology and cytoskeletal organization. Required in the stress fiber dynamics and cell migration. In Xenopus tropicalis (Western clawed frog), this protein is Ubiquitin thioesterase zranb1 (zranb1).